The chain runs to 310 residues: Homoserine kinase (310 aa).

91 to 101 (PIGSGLGSSAC) is a binding site for ATP.

It belongs to the GHMP kinase family. Homoserine kinase subfamily.

It is found in the cytoplasm. It catalyses the reaction L-homoserine + ATP = O-phospho-L-homoserine + ADP + H(+). Its pathway is amino-acid biosynthesis; L-threonine biosynthesis; L-threonine from L-aspartate: step 4/5. Catalyzes the ATP-dependent phosphorylation of L-homoserine to L-homoserine phosphate. The sequence is that of Homoserine kinase from Escherichia coli O157:H7.